The sequence spans 374 residues: S-adenosylmethionine:tRNA ribosyltransferase-isomerase (374 aa).

It belongs to the QueA family. Monomer.

It localises to the cytoplasm. The enzyme catalyses 7-aminomethyl-7-carbaguanosine(34) in tRNA + S-adenosyl-L-methionine = epoxyqueuosine(34) in tRNA + adenine + L-methionine + 2 H(+). The protein operates within tRNA modification; tRNA-queuosine biosynthesis. Its function is as follows. Transfers and isomerizes the ribose moiety from AdoMet to the 7-aminomethyl group of 7-deazaguanine (preQ1-tRNA) to give epoxyqueuosine (oQ-tRNA). The chain is S-adenosylmethionine:tRNA ribosyltransferase-isomerase from Sorangium cellulosum (strain So ce56) (Polyangium cellulosum (strain So ce56)).